A 235-amino-acid polypeptide reads, in one-letter code: uncharacterized protein (235 aa).

A run of 3 helical transmembrane segments spans residues 41–61 (IFWHPLYLAVFGLVFMGIYRL), 71–91 (LRTFVLLILVSAVFLTLIEFP), and 129–149 (IGIIGILPANAPGAYQNTPTI).

It is found in the membrane. This is an uncharacterized protein from Schizosaccharomyces pombe (strain 972 / ATCC 24843) (Fission yeast).